The sequence spans 29 residues: Conotoxin SIVC (29 aa).

Residue Ala1 is modified to N-acetylalanine; partial. At Pro2 the chain carries 4-hydroxyproline. 2 O-linked (HexNAc...) threonine glycosylation sites follow: Thr7 and Thr9. 4-hydroxyproline occurs at positions 18 and 22. Cys29 bears the Cysteine amide mark.

The protein belongs to the conotoxin A superfamily. In terms of processing, O-linked glycans consist of Hex4-HexNAc2 hexasaccharides. Post-translationally, N-terminus is found to be free and N-acetylated, depending on the fraction studied. Contains 3 disulfide bonds. Expressed by the venom duct. Low expression in the distal venom duct sections.

The protein resides in the secreted. In terms of biological role, probable neurotoxin with ion channel inhibitor activity. The polypeptide is Conotoxin SIVC (Conus striatus (Striated cone)).